The sequence spans 1459 residues: ARF guanine-nucleotide exchange factor 2 (1459 aa).

Residues S46 and S284 each carry the phosphoserine modification. The 145-residue stretch at 570 to 714 (FNEKPKKGIP…IIMLNTDLHN (145 aa)) folds into the SEC7 domain. Residues 1412–1459 (EKGNGSSSHGSAHEQTPESNDVEIEATAPIDDNTDDDNKPKLSDVEKD) form a disordered region. Residues 1447–1459 (DDNKPKLSDVEKD) are compositionally biased toward basic and acidic residues.

Interacts (via SEC7 domain) with DRS2 (via C-terminus); the interaction is direct. Interacts with GMH1.

The protein resides in the cytoplasm. The protein localises to the cytosol. Its subcellular location is the membrane. It localises to the golgi apparatus membrane. Functionally, activates the ARF proteins by exchanging bound GDP for free GTP. Plays a role in maintaining mitochondrial morphology. Stimulates DRS2 flippase activity. The protein is ARF guanine-nucleotide exchange factor 2 (GEA2) of Saccharomyces cerevisiae (strain ATCC 204508 / S288c) (Baker's yeast).